The sequence spans 125 residues: Small ribosomal subunit protein uS12c (125 aa).

The tract at residues 1 to 23 (MPTLEHLTRSPRKKIKRKTKSPA) is disordered. Residues 9-20 (RSPRKKIKRKTK) show a composition bias toward basic residues.

Belongs to the universal ribosomal protein uS12 family. In terms of assembly, part of the 30S ribosomal subunit.

It is found in the plastid. The protein localises to the chloroplast. Its function is as follows. With S4 and S5 plays an important role in translational accuracy. Located at the interface of the 30S and 50S subunits. This chain is Small ribosomal subunit protein uS12c (rps12), found in Euglena gracilis.